The sequence spans 366 residues: S-adenosylmethionine:tRNA ribosyltransferase-isomerase (366 aa).

This sequence belongs to the QueA family. In terms of assembly, monomer.

The protein resides in the cytoplasm. It catalyses the reaction 7-aminomethyl-7-carbaguanosine(34) in tRNA + S-adenosyl-L-methionine = epoxyqueuosine(34) in tRNA + adenine + L-methionine + 2 H(+). It functions in the pathway tRNA modification; tRNA-queuosine biosynthesis. Its function is as follows. Transfers and isomerizes the ribose moiety from AdoMet to the 7-aminomethyl group of 7-deazaguanine (preQ1-tRNA) to give epoxyqueuosine (oQ-tRNA). The polypeptide is S-adenosylmethionine:tRNA ribosyltransferase-isomerase (Synechococcus sp. (strain CC9605)).